A 285-amino-acid polypeptide reads, in one-letter code: Urease accessory protein UreD (285 aa).

It belongs to the UreD family. UreD, UreF and UreG form a complex that acts as a GTP-hydrolysis-dependent molecular chaperone, activating the urease apoprotein by helping to assemble the nickel containing metallocenter of UreC. The UreE protein probably delivers the nickel.

The protein resides in the cytoplasm. Functionally, required for maturation of urease via the functional incorporation of the urease nickel metallocenter. In Picosynechococcus sp. (strain ATCC 27264 / PCC 7002 / PR-6) (Agmenellum quadruplicatum), this protein is Urease accessory protein UreD.